The following is a 211-amino-acid chain: Allatostatins MIP (211 aa).

An N-terminal signal peptide occupies residues 1 to 24 (MAHTKTRRTYGFLMVLLILGSACG). A propeptide spanning residues 25–63 (NLVASGSAGSPPSNEPGGGGLSEQVVLDQLSESDLYGNN) is cleaved from the precursor. Tryptophan amide is present on W74. The propeptide occupies 78-148 (SSSGDVSDPD…DDLAGEPDVE (71 aa)). A compositionally biased stretch (low complexity) spans 115-135 (ASGQSAQQQQQQPLQQQSQSG). Positions 115-142 (ASGQSAQQQQQQPLQQQSQSGEDFDDLA) are disordered. A tryptophan amide mark is found at W159, W175, W189, and W202. Positions 168–190 (WNKFRGAWGKREPTWNNLKGMWG) are disordered. A propeptide spanning residues 206–211 (SQLPSN) is cleaved from the precursor.

In larvae, strongly expressed in the midgut region before and in between the copper cells, and in a group of cells in the posterior part of the larval midgut. Expressed in the neurons of many areas including the subesophageal ganglion/tritocerebrum (SOG), olfactory glomeruli, lateral ventral protocerebrum, mushroom body, the optic lobe medulla and in the antennal lobes.

The protein resides in the secreted. In terms of biological role, ligand for the sex peptide receptor (SPR). Stabilizes sleep and maintains sleep homeostasis to inhibit the activity of wake-promoting circuits, such as those that involve the pigment dispersing factor (pdf) neurons. Regulated by the circadian clock network and pathways associated with a sleep homeostat. May also have a regulatory role in gut motility. The chain is Allatostatins MIP (Mip) from Drosophila melanogaster (Fruit fly).